An 81-amino-acid chain; its full sequence is Cytotoxin 1 (81 aa).

Residues 1-21 form the signal peptide; it reads MKTLLLTLVVVTIVCLDLGYT. 4 cysteine pairs are disulfide-bonded: cysteine 24–cysteine 42, cysteine 35–cysteine 59, cysteine 63–cysteine 74, and cysteine 75–cysteine 80.

This sequence belongs to the three-finger toxin family. Short-chain subfamily. Type IA cytotoxin sub-subfamily. In terms of assembly, monomer in solution; Homodimer and oligomer in the presence of negatively charged lipids forming a pore with a size ranging between 20 and 30 Angstroms. Expressed by the venom gland.

The protein resides in the secreted. Its subcellular location is the target cell membrane. In terms of biological role, basic protein that binds to cell membrane and depolarizes cardiomyocytes. It also shows lytic activities on many other cells, including red blood cells. Interaction with sulfatides in the cell membrane induces pore formation and cell internalization and is responsible for cytotoxicity in cardiomyocytes. It targets the mitochondrial membrane and induces mitochondrial swelling and fragmentation. It binds to the integrin alpha-V/beta-3 (ITGAV/ITGB3) with a moderate affinity and inhibits protein kinases C. It also binds with high affinity to heparin. It also causes skeletal muscle necrosis after intramuscular injection into mice. This Naja atra (Chinese cobra) protein is Cytotoxin 1.